The sequence spans 912 residues: MSSALSPEGDRRYSDDSLSSVSTTSLVFERIQEKTEMDADNDKEKDPRALDDEDPLRDEDDLETGPFLGPGASLHREPMDRGLRRILIIVAVVFIGGWLAGLGIFIASGSYHHESDTEHDPDANSRGSGKSLSMDQLFDGTWSPKYHSISWIAGPKGEDGLLLEVGASNKPYIVVEDIRSDKNVATRDDAEPKASNSRTLMEHPYFEYDGKQYSPSWSEPSPDLTKVLLGVDRKKNWRHSFSAIYFVLDVKTQEAEPLVPDQVDARIQLASWSPKSDAVSFTRENNLYIRRLTGDKDVTQITKDGGPEYFYGIPDWVYEEEVFSGRSATWWSDDGKYLAFLRTNETGVPEYPVQFFIERPSGTTPEDGEEAYPEVEQIKYPKAGAHNPVVDLQFYDIGKKDTFSVEIDGAFADDDRIINNLLWAGDKAIVKQTNRVSDVLKVVLVDVPSRKGKTINTININEIDGGWFEISHKMTYIPADPKNGREHDGYVDSVIHEGYDHLAYFTPLDNSEPIMLTKGNWEVDDAPSAVDLANNLVYFIAAKESSIQRHVYSVKLDGSDLQALTDPKTEAYYDASFSKGAGFVFLSYRGPKVPTQKVISTPVSASSYERIIEDNAELADRARRHELPILKYGTLDLDTGVKVNYVERRPPHFDAKKQYPVLFHQYSGPGSQSVTKRFAVDFQAYVAAALGYLVITVDPRGTGFLGRKHRVTVRSKLGVHEAHDHIAAAASFASRPYVDAERLAIWGWSYGGFTTLKTLEQDAGRTFSYGMAVAPVTDWRFYDSIYTERYMRTPQDNPDGYDLSKVANATALGENKRFLLMHGVADDNVHFQNSLTLLDDLDLAGVENYDVHVFPDSDHSIYFHNGNRIVYDKLRNWLINAFNGEWLKVSNPQPQKDPVEKEKRHMVPQALV.

Positions 1–74 are disordered; sequence MSSALSPEGD…GPFLGPGASL (74 aa). Residues 1 to 85 lie on the Cytoplasmic side of the membrane; it reads MSSALSPEGD…REPMDRGLRR (85 aa). A compositionally biased stretch (low complexity) spans 16 to 27; sequence DSLSSVSTTSLV. The segment covering 30–50 has biased composition (basic and acidic residues); that stretch reads RIQEKTEMDADNDKEKDPRAL. A compositionally biased stretch (acidic residues) spans 51–63; sequence DDEDPLRDEDDLE. The helical; Signal-anchor for type II membrane protein transmembrane segment at 86–106 threads the bilayer; that stretch reads ILIIVAVVFIGGWLAGLGIFI. The Vacuolar portion of the chain corresponds to 107–912; sequence ASGSYHHESD…KRHMVPQALV (806 aa). Asn344 is a glycosylation site (N-linked (GlcNAc...) asparagine). Ser749 serves as the catalytic Charge relay system. An N-linked (GlcNAc...) asparagine glycan is attached at Asn808. Active-site charge relay system residues include Asp826 and His859. The interval 892–912 is disordered; it reads PQPQKDPVEKEKRHMVPQALV.

This sequence belongs to the peptidase S9B family.

The protein localises to the vacuole membrane. It catalyses the reaction Release of an N-terminal dipeptide, Xaa-Yaa-|-Zaa-, from a polypeptide, preferentially when Yaa is Pro, provided Zaa is neither Pro nor hydroxyproline.. Functionally, type IV dipeptidyl-peptidase which removes N-terminal dipeptides sequentially from polypeptides having unsubstituted N-termini provided that the penultimate residue is proline. The polypeptide is Probable dipeptidyl-aminopeptidase B (DAPB) (Fusarium vanettenii (strain ATCC MYA-4622 / CBS 123669 / FGSC 9596 / NRRL 45880 / 77-13-4) (Fusarium solani subsp. pisi)).